The chain runs to 60 residues: UPF0181 protein ESA_01442 (60 aa).

The protein belongs to the UPF0181 family.

In Cronobacter sakazakii (strain ATCC BAA-894) (Enterobacter sakazakii), this protein is UPF0181 protein ESA_01442.